Reading from the N-terminus, the 475-residue chain is Ribulose bisphosphate carboxylase large chain (475 aa).

A propeptide spanning residues 1–2 is cleaved from the precursor; it reads MS. Position 3 is an N-acetylproline (proline 3). Lysine 14 carries the post-translational modification N6,N6,N6-trimethyllysine. The substrate site is built by asparagine 123 and threonine 173. Lysine 175 serves as the catalytic Proton acceptor. A substrate-binding site is contributed by lysine 177. The Mg(2+) site is built by lysine 201, aspartate 203, and glutamate 204. The residue at position 201 (lysine 201) is an N6-carboxylysine. Residue histidine 294 is the Proton acceptor of the active site. Arginine 295, histidine 327, and serine 379 together coordinate substrate.

The protein belongs to the RuBisCO large chain family. Type I subfamily. In terms of assembly, heterohexadecamer of 8 large chains and 8 small chains; disulfide-linked. The disulfide link is formed within the large subunit homodimers. The cofactor is Mg(2+). In terms of processing, the disulfide bond which can form in the large chain dimeric partners within the hexadecamer appears to be associated with oxidative stress and protein turnover.

The protein resides in the plastid. It localises to the chloroplast. The enzyme catalyses 2 (2R)-3-phosphoglycerate + 2 H(+) = D-ribulose 1,5-bisphosphate + CO2 + H2O. It carries out the reaction D-ribulose 1,5-bisphosphate + O2 = 2-phosphoglycolate + (2R)-3-phosphoglycerate + 2 H(+). In terms of biological role, ruBisCO catalyzes two reactions: the carboxylation of D-ribulose 1,5-bisphosphate, the primary event in carbon dioxide fixation, as well as the oxidative fragmentation of the pentose substrate in the photorespiration process. Both reactions occur simultaneously and in competition at the same active site. The sequence is that of Ribulose bisphosphate carboxylase large chain from Picea abies (Norway spruce).